A 472-amino-acid polypeptide reads, in one-letter code: Regulator of G-protein signaling 6 (472 aa).

Positions 40-115 (KTGGVPIRTV…DDGTFYRFQA (76 aa)) constitute a DEP domain. The G protein gamma domain occupies 261–330 (IRKQITFLNA…MSKEPSQQRV (70 aa)). Positions 336-441 (SFDEILKDQV…LMKSDSYARF (106 aa)) constitute an RGS domain.

As to quaternary structure, interacts with GNB5. Interacts with RGS7BP, leading to regulate the subcellular location of the heterodimer formed with GNB5. Interacts with GNAI1.

It is found in the cytoplasm. It localises to the cytosol. Its subcellular location is the membrane. The protein localises to the nucleus. The protein resides in the cell membrane. Its function is as follows. Regulates G protein-coupled receptor signaling cascades. Inhibits signal transduction by increasing the GTPase activity of G protein alpha subunits, thereby driving them into their inactive GDP-bound form. The RGS6/GNB5 dimer enhances GNAO1 GTPase activity. This chain is Regulator of G-protein signaling 6 (RGS6), found in Homo sapiens (Human).